Consider the following 173-residue polypeptide: Phosphopantetheine adenylyltransferase (173 aa).

Ser9 lines the substrate pocket. Residues 9-10 and His17 each bind ATP; that span reads SF. Substrate is bound by residues Lys41, Thr73, and Arg87. ATP contacts are provided by residues 88–90, Glu98, and 123–129; these read GLR and YQHLSSS.

Belongs to the bacterial CoaD family. Homohexamer. The cofactor is Mg(2+).

It is found in the cytoplasm. It carries out the reaction (R)-4'-phosphopantetheine + ATP + H(+) = 3'-dephospho-CoA + diphosphate. Its pathway is cofactor biosynthesis; coenzyme A biosynthesis; CoA from (R)-pantothenate: step 4/5. Its function is as follows. Reversibly transfers an adenylyl group from ATP to 4'-phosphopantetheine, yielding dephospho-CoA (dPCoA) and pyrophosphate. The protein is Phosphopantetheine adenylyltransferase of Limosilactobacillus reuteri (strain DSM 20016) (Lactobacillus reuteri).